Consider the following 250-residue polypeptide: Acetylglutamate kinase (250 aa).

Substrate contacts are provided by residues G41–G42, R63, and N156.

Belongs to the acetylglutamate kinase family. ArgB subfamily.

Its subcellular location is the cytoplasm. It carries out the reaction N-acetyl-L-glutamate + ATP = N-acetyl-L-glutamyl 5-phosphate + ADP. Its pathway is amino-acid biosynthesis; L-arginine biosynthesis; N(2)-acetyl-L-ornithine from L-glutamate: step 2/4. In terms of biological role, catalyzes the ATP-dependent phosphorylation of N-acetyl-L-glutamate. The polypeptide is Acetylglutamate kinase (Listeria welshimeri serovar 6b (strain ATCC 35897 / DSM 20650 / CCUG 15529 / CIP 8149 / NCTC 11857 / SLCC 5334 / V8)).